Consider the following 453-residue polypeptide: Carbamoyl phosphate synthase arginine-specific small chain (453 aa).

The transit peptide at M1–A13 directs the protein to the mitochondrion. The 188-residue stretch at H233–A420 folds into the Glutamine amidotransferase type-1 domain. C309 serves as the catalytic Nucleophile. Catalysis depends on residues H393 and E395.

Belongs to the CarA family. As to quaternary structure, heterodimer composed of 2 chains; the small (or glutamine) chain promotes the hydrolysis of glutamine to ammonia, which is used by the large (or ammonia) chain to synthesize carbamoyl phosphate.

The protein localises to the mitochondrion matrix. The enzyme catalyses hydrogencarbonate + L-glutamine + 2 ATP + H2O = carbamoyl phosphate + L-glutamate + 2 ADP + phosphate + 2 H(+). The catalysed reaction is L-glutamine + H2O = L-glutamate + NH4(+). Its pathway is amino-acid biosynthesis; L-arginine biosynthesis; carbamoyl phosphate from bicarbonate: step 1/1. In terms of biological role, small subunit of the arginine-specific carbamoyl phosphate synthase (CPSase). CPSase catalyzes the formation of carbamoyl phosphate from the ammonia moiety of glutamine, carbonate, and phosphate donated by ATP, the first step of the arginine biosynthetic pathway. The small subunit (glutamine amidotransferase) binds and cleaves glutamine to supply the large subunit with the substrate ammonia. This Hypocrea virens (Gliocladium virens) protein is Carbamoyl phosphate synthase arginine-specific small chain (cpa1).